Reading from the N-terminus, the 841-residue chain is Chitin synthase 1 (841 aa).

The span at 1–13 shows a compositional bias: basic and acidic residues; that stretch reads MNPGQKQEHDQYP. The segment at 1–98 is disordered; sequence MNPGQKQEHD…YGEAPRRQPR (98 aa). Over residues 76–85 the composition is skewed to pro residues; it reads PPQPMGPPSP. Transmembrane regions (helical) follow at residues 302–322, 385–405, 526–546, 564–584, 602–622, 644–664, 673–693, 778–798, and 816–836; these read WFFQ…IDVG, SVFG…FTAL, LIFS…LTSA, ILHT…FILA, FFAI…VVGV, NIII…FLFF, FIQY…YAFC, VISW…ENIL, and LWSV…YLIF.

It belongs to the chitin synthase family.

It is found in the cell membrane. It carries out the reaction [(1-&gt;4)-N-acetyl-beta-D-glucosaminyl](n) + UDP-N-acetyl-alpha-D-glucosamine = [(1-&gt;4)-N-acetyl-beta-D-glucosaminyl](n+1) + UDP + H(+). In terms of biological role, polymerizes chitin, a structural polymer of the cell wall and septum, by transferring the sugar moiety of UDP-GlcNAc to the non-reducing end of the growing chitin polymer. The polypeptide is Chitin synthase 1 (chs1) (Phycomyces blakesleeanus (strain ATCC 8743b / DSM 1359 / FGSC 10004 / NBRC 33097 / NRRL 1555)).